The sequence spans 258 residues: Tryptophan synthase alpha chain (258 aa).

Catalysis depends on proton acceptor residues Glu47 and Asp58.

It belongs to the TrpA family. Tetramer of two alpha and two beta chains.

The enzyme catalyses (1S,2R)-1-C-(indol-3-yl)glycerol 3-phosphate + L-serine = D-glyceraldehyde 3-phosphate + L-tryptophan + H2O. It functions in the pathway amino-acid biosynthesis; L-tryptophan biosynthesis; L-tryptophan from chorismate: step 5/5. Functionally, the alpha subunit is responsible for the aldol cleavage of indoleglycerol phosphate to indole and glyceraldehyde 3-phosphate. The sequence is that of Tryptophan synthase alpha chain from Bacillus cereus (strain AH820).